Reading from the N-terminus, the 279-residue chain is 1-(5-phosphoribosyl)-5-[(5-phosphoribosylamino)methylideneamino] imidazole-4-carboxamide isomerase (279 aa).

It belongs to the HisA/HisF family.

The protein resides in the cytoplasm. It carries out the reaction 1-(5-phospho-beta-D-ribosyl)-5-[(5-phospho-beta-D-ribosylamino)methylideneamino]imidazole-4-carboxamide = 5-[(5-phospho-1-deoxy-D-ribulos-1-ylimino)methylamino]-1-(5-phospho-beta-D-ribosyl)imidazole-4-carboxamide. Its pathway is amino-acid biosynthesis; L-histidine biosynthesis; L-histidine from 5-phospho-alpha-D-ribose 1-diphosphate: step 4/9. The polypeptide is 1-(5-phosphoribosyl)-5-[(5-phosphoribosylamino)methylideneamino] imidazole-4-carboxamide isomerase (HIS6) (Candida albicans (Yeast)).